The primary structure comprises 601 residues: MTHIESTFSFLGLNPFIIQSLNEMGYVKPSPIQASCIPLLLEGRDVLGMAQTGSGKTAAFSLPLLHNLNINLKAPQILVLAPTRELAVQVAEAFSDFSKYMIGIHVLPLYGGQRYELQLRALRQGPQIVVGTPGRLLDHLKRGTLNLSNLHGLVLDEADEMLRMGFIEDVETIMAQIPKEHQTALFSATMPEAIRRISKRFMRNPKEIKIQSNITTRPDIKQSYWMVYGRKTDALIRFLEAEDFSATIIFVRTKNATLEVSEALERNGYNSAALNGDMNQALREQTLERLKNGRLDILIATDVAARGLDVDRISFVINYDIPMDSESYVHRIGRTGRAGRAGRALLFVENRERRLLRNIERTMKQSIPEVQLPKVELLCQRRLEQFAKKVQQQLESRDLDEYSALLDKLYSTDDLDIKTLAAALLKMAQGERPLIIKPDVIKRQSRDLLFQDDRRREDNRNSRTRRDRRDINKDAELYRIEVGRNDGVEVRHIVGAIANEGNINSRNIGNIKLFSSYSTIELPKGMSKDLLQTFNRTRILNKPINMKLLRDSRHYENKTTHRSIFNKDKNSNRRVSDGSFNKSNSPKKTEFKSSFFRRRNV.

The Q motif motif lies at 6–34 (STFSFLGLNPFIIQSLNEMGYVKPSPIQA). The region spanning 37-208 (IPLLLEGRDV…KRFMRNPKEI (172 aa)) is the Helicase ATP-binding domain. An ATP-binding site is contributed by 50–57 (AQTGSGKT). The DEAD box signature appears at 156-159 (DEAD). Residues 231–378 (KTDALIRFLE…EVQLPKVELL (148 aa)) form the Helicase C-terminal domain. Positions 552–576 (SRHYENKTTHRSIFNKDKNSNRRVS) are enriched in basic and acidic residues. The tract at residues 552-601 (SRHYENKTTHRSIFNKDKNSNRRVSDGSFNKSNSPKKTEFKSSFFRRRNV) is disordered.

It belongs to the DEAD box helicase family. DeaD/CsdA subfamily.

The protein localises to the cytoplasm. The catalysed reaction is ATP + H2O = ADP + phosphate + H(+). In terms of biological role, DEAD-box RNA helicase involved in various cellular processes at low temperature, including ribosome biogenesis, mRNA degradation and translation initiation. The protein is ATP-dependent RNA helicase DeaD of Buchnera aphidicola subsp. Acyrthosiphon pisum (strain APS) (Acyrthosiphon pisum symbiotic bacterium).